A 582-amino-acid chain; its full sequence is Pre-hexon-linking protein IIIa (582 aa).

The tract at residues 1 to 114 (MQRPAIIAER…ALLERVARYN (114 aa)) is peripentonal hexon-tethering domain. The tract at residues 146–259 (GSLVALNAFL…FTNTNSLSRD (114 aa)) is binding to hexon-linking protein. Phosphoserine; by host is present on Ser233. At Thr282 the chain carries Phosphothreonine; by host. The tract at residues 437–479 (GKKEAGDEGPLLDSRASSPFPSLTSLPASVNSGRTTRPRLTGE) is disordered. Positions 451-471 (RASSPFPSLTSLPASVNSGRT) are enriched in polar residues. Residues Ser458 and Ser465 each carry the phosphoserine; by host modification. The residue at position 482 (Tyr482) is a Phosphotyrosine; by host. A Phosphoserine; by host modification is found at Ser503. A compositionally biased stretch (basic and acidic residues) spans 517 to 526 (ERREWEERQP). Residues 517 to 582 (ERREWEERQP…RPQGCIGSLY (66 aa)) form a disordered region. A compositionally biased stretch (basic residues) spans 530–543 (RPPRQRWQRRKKGA). The propeptide occupies 566 to 582 (GNPFAHLRPQGCIGSLY).

The protein belongs to the adenoviridae hexon-linking protein IIIa family. Interacts with hexon proteins; this interaction tethers the peripentonal hexons to hexons situated in the facet. Interacts with the penton protein (via N-terminus). Interacts with packaging protein 3; this interaction is required to promote correct genome packaging. Cleaved near the C-terminus by the viral protease during virion maturation to form the mature protein.

The protein resides in the virion. Its subcellular location is the host nucleus. Functionally, structural component of the virion that acts as a cement protein on the capsid exterior which mediates the interactions between the hexons, including the peripentonal hexons, and reaches all the way to the penton vertices. Two hexon linking proteins IIIa, one from each facet, stabilize the unique edge interface between a pair of facets. As the virus enters the host cell, hexon linking proteins IIIa are shed concomitant with virion acidification in the endosome. During virus assembly, seems to play a role in the serotype specificity of the packaging of viral DNA via its interaction with packaging protein 3. This chain is Pre-hexon-linking protein IIIa, found in Human adenovirus A serotype 12 (HAdV-12).